The sequence spans 775 residues: Endothelin-converting enzyme-like 1 (775 aa).

Over M1–C61 the chain is Cytoplasmic. Residues G30–L52 form a disordered region. Positions S32–L52 are enriched in low complexity. Residues L62–L82 traverse the membrane as a helical; Signal-anchor for type II membrane protein segment. The Lumenal segment spans residues K83–W775. Residues G99 to W775 enclose the Peptidase M13 domain. 4 cysteine pairs are disulfide-bonded: C124-C760, C132-C720, C188-C441, and C649-C772. 2 N-linked (GlcNAc...) asparagine glycosylation sites follow: N255 and N322. Residue H612 participates in Zn(2+) binding. Residue E613 is part of the active site. H616 lines the Zn(2+) pocket. N656 carries an N-linked (GlcNAc...) asparagine glycan. Residue E672 coordinates Zn(2+). D676 acts as the Proton donor in catalysis.

It belongs to the peptidase M13 family. It depends on Zn(2+) as a cofactor.

The protein resides in the membrane. In terms of biological role, may contribute to the degradation of peptide hormones and be involved in the inactivation of neuronal peptides. The sequence is that of Endothelin-converting enzyme-like 1 (Ecel1) from Mus musculus (Mouse).